A 157-amino-acid chain; its full sequence is Beta-defensin 125 (157 aa).

The signal sequence occupies residues 1-20; the sequence is MNILMLTFIICGLLTQVTKG. 3 disulfides stabilise this stretch: cysteine 27/cysteine 55, cysteine 35/cysteine 49, and cysteine 39/cysteine 56. The interval 109-157 is disordered; that stretch reads GETMTPETNTPETTVPPSETTTPETTMPPSETATSETMPPPSQTALTHN. The span at 110–145 shows a compositional bias: low complexity; sequence ETMTPETNTPETTVPPSETTTPETTMPPSETATSET.

This sequence belongs to the beta-defensin family.

Its subcellular location is the secreted. Functionally, has antibacterial activity. This is Beta-defensin 125 (DEFB125) from Gorilla gorilla gorilla (Western lowland gorilla).